The primary structure comprises 68 residues: Sec-independent protein translocase protein TatA (68 aa).

A helical membrane pass occupies residues 1–21; it reads MGSFSIWHWLIVLAVVLLLFG. The tract at residues 42–68 is disordered; it reads GMGDDEVASADKSVDGKTVDHKSDEVR. Residues 53-68 are compositionally biased toward basic and acidic residues; the sequence is KSVDGKTVDHKSDEVR.

The protein belongs to the TatA/E family. In terms of assembly, the Tat system comprises two distinct complexes: a TatABC complex, containing multiple copies of TatA, TatB and TatC subunits, and a separate TatA complex, containing only TatA subunits. Substrates initially bind to the TatABC complex, which probably triggers association of the separate TatA complex to form the active translocon.

It localises to the cell inner membrane. Part of the twin-arginine translocation (Tat) system that transports large folded proteins containing a characteristic twin-arginine motif in their signal peptide across membranes. TatA could form the protein-conducting channel of the Tat system. The protein is Sec-independent protein translocase protein TatA of Rhizobium meliloti (strain 1021) (Ensifer meliloti).